The following is a 497-amino-acid chain: Serine hydroxymethyltransferase (497 aa).

Residues Leu-176 and 180–182 each bind (6S)-5,6,7,8-tetrahydrofolate; that span reads GHL. The residue at position 289 (Lys-289) is an N6-(pyridoxal phosphate)lysine.

This sequence belongs to the SHMT family. Homodimer. The cofactor is pyridoxal 5'-phosphate.

It localises to the cytoplasm. The enzyme catalyses (6R)-5,10-methylene-5,6,7,8-tetrahydrofolate + glycine + H2O = (6S)-5,6,7,8-tetrahydrofolate + L-serine. It functions in the pathway one-carbon metabolism; tetrahydrofolate interconversion. Its pathway is amino-acid biosynthesis; glycine biosynthesis; glycine from L-serine: step 1/1. Its function is as follows. Catalyzes the reversible interconversion of serine and glycine with tetrahydrofolate (THF) serving as the one-carbon carrier. This reaction serves as the major source of one-carbon groups required for the biosynthesis of purines, thymidylate, methionine, and other important biomolecules. Also exhibits THF-independent aldolase activity toward beta-hydroxyamino acids, producing glycine and aldehydes, via a retro-aldol mechanism. The chain is Serine hydroxymethyltransferase from Chlamydia felis (strain Fe/C-56) (Chlamydophila felis).